The chain runs to 432 residues: 3-chlorobenzoate-3,4-dioxygenase oxygenase subunit (432 aa).

One can recognise a Rieske domain in the interval 27 to 133 (WIPALKSTEL…VKEMAGVVWV (107 aa)). The [2Fe-2S] cluster site is built by C69, H71, C88, and H91. Residues H180 and H185 each contribute to the Fe cation site.

This sequence belongs to the bacterial ring-hydroxylating dioxygenase alpha subunit family. This dioxygenase system consists of two proteins: an oxygenase and an oxygenase reductase. The cofactor is [2Fe-2S] cluster. Requires Fe cation as cofactor.

The polypeptide is 3-chlorobenzoate-3,4-dioxygenase oxygenase subunit (cbaA) (Comamonas testosteroni (Pseudomonas testosteroni)).